We begin with the raw amino-acid sequence, 118 residues long: uncharacterized protein (118 aa).

Residues 41–61 (IFLLIIITIIFALTMYTSVQV) form a helical membrane-spanning segment.

The protein resides in the host membrane. This is an uncharacterized protein from Ostreid herpesvirus 1 (isolate France) (OsHV-1).